A 359-amino-acid chain; its full sequence is 3-dehydroquinate synthase (359 aa).

Residues 72 to 77, 106 to 110, 130 to 131, Lys143, and Lys152 each bind NAD(+); these read DGEHYK, GVIGD, and TT. Residues Glu185, His248, and His265 each coordinate Zn(2+).

This sequence belongs to the sugar phosphate cyclases superfamily. Dehydroquinate synthase family. Co(2+) is required as a cofactor. It depends on Zn(2+) as a cofactor. The cofactor is NAD(+).

The protein resides in the cytoplasm. The catalysed reaction is 7-phospho-2-dehydro-3-deoxy-D-arabino-heptonate = 3-dehydroquinate + phosphate. It functions in the pathway metabolic intermediate biosynthesis; chorismate biosynthesis; chorismate from D-erythrose 4-phosphate and phosphoenolpyruvate: step 2/7. Functionally, catalyzes the conversion of 3-deoxy-D-arabino-heptulosonate 7-phosphate (DAHP) to dehydroquinate (DHQ). This is 3-dehydroquinate synthase from Thermodesulfovibrio yellowstonii (strain ATCC 51303 / DSM 11347 / YP87).